The sequence spans 200 residues: Peptidyl-tRNA hydrolase (200 aa).

Position 23 (Y23) interacts with tRNA. H28 acts as the Proton acceptor in catalysis. The tRNA site is built by F79, N81, and N127.

It belongs to the PTH family. Monomer.

Its subcellular location is the cytoplasm. It carries out the reaction an N-acyl-L-alpha-aminoacyl-tRNA + H2O = an N-acyl-L-amino acid + a tRNA + H(+). In terms of biological role, hydrolyzes ribosome-free peptidyl-tRNAs (with 1 or more amino acids incorporated), which drop off the ribosome during protein synthesis, or as a result of ribosome stalling. Catalyzes the release of premature peptidyl moieties from peptidyl-tRNA molecules trapped in stalled 50S ribosomal subunits, and thus maintains levels of free tRNAs and 50S ribosomes. The sequence is that of Peptidyl-tRNA hydrolase from Streptomyces coelicolor (strain ATCC BAA-471 / A3(2) / M145).